The chain runs to 364 residues: tRNA-specific 2-thiouridylase MnmA 2 (364 aa).

ATP contacts are provided by residues 10-17 (GMSGGVDS) and Met36. Cys106 acts as the Nucleophile in catalysis. An intrachain disulfide couples Cys106 to Cys204. Residue Gly130 participates in ATP binding. Residues 154 to 156 (KDQ) are interaction with tRNA. The active-site Cysteine persulfide intermediate is Cys204. Residues 310-311 (RY) are interaction with tRNA.

It belongs to the MnmA/TRMU family.

It is found in the cytoplasm. It catalyses the reaction S-sulfanyl-L-cysteinyl-[protein] + uridine(34) in tRNA + AH2 + ATP = 2-thiouridine(34) in tRNA + L-cysteinyl-[protein] + A + AMP + diphosphate + H(+). Functionally, catalyzes the 2-thiolation of uridine at the wobble position (U34) of tRNA, leading to the formation of s(2)U34. This chain is tRNA-specific 2-thiouridylase MnmA 2, found in Caldanaerobacter subterraneus subsp. tengcongensis (strain DSM 15242 / JCM 11007 / NBRC 100824 / MB4) (Thermoanaerobacter tengcongensis).